The following is a 1377-amino-acid chain: Endoribonuclease Dicer homolog 2b (1377 aa).

Residues 1–15 (MGGPLTAAGGRGDGG) show a composition bias toward gly residues. The segment at 1-30 (MGGPLTAAGGRGDGGAKAVEPLRPPPPPDP) is disordered. One can recognise a Helicase ATP-binding domain in the interval 41–222 (ALERAVRGNT…HNYSKQISEI (182 aa)). An ATP-binding site is contributed by 54-61 (LETGSGKT). Positions 163-166 (DECH) match the DECH box motif. Positions 388–561 (TLLQYRHMQD…DTYYRVESTP (174 aa)) constitute a Helicase C-terminal domain. One can recognise a Dicer dsRNA-binding fold domain in the interval 534–626 (SLRLGSISCQ…LPELDVPCDE (93 aa)). Residues 798–913 (RDIDLLQTKD…LPPELCRIIM (116 aa)) form the PAZ domain. 2 consecutive RNase III domains span residues 940-1095 (SVKL…STAG) and 1132-1276 (VRSL…LDSK). The Mg(2+) site is built by glutamate 1171, aspartate 1262, and glutamate 1265. A DRBM domain is found at 1302–1367 (DPVKGLQEFC…SKAVLKDLIA (66 aa)).

It belongs to the helicase family. Dicer subfamily. In terms of assembly, may interact with ARGONAUTE1 or PINHEAD through their common PAZ domains. It depends on Mg(2+) as a cofactor. Mn(2+) serves as cofactor.

It localises to the nucleus. Functionally, probably involved in the RNA silencing pathway. May cleave double-stranded RNA to produce short 21-24 nucleotides (nt) RNAs which target the selective destruction of complementary RNAs. This chain is Endoribonuclease Dicer homolog 2b (DCL2B), found in Oryza sativa subsp. japonica (Rice).